Consider the following 131-residue polypeptide: Global transcriptional regulator Spx 2 (131 aa).

Cysteine 10 and cysteine 13 are oxidised to a cystine.

The protein belongs to the ArsC family. Spx subfamily. As to quaternary structure, interacts with the C-terminal domain of the alpha subunit of the RNAP.

Its subcellular location is the cytoplasm. Global transcriptional regulator that plays a key role in stress response and exerts either positive or negative regulation of genes. Acts by interacting with the C-terminal domain of the alpha subunit of the RNA polymerase (RNAP). This interaction can enhance binding of RNAP to the promoter region of target genes and stimulate their transcription, or block interaction of RNAP with activator. This Bacillus cereus (strain ATCC 14579 / DSM 31 / CCUG 7414 / JCM 2152 / NBRC 15305 / NCIMB 9373 / NCTC 2599 / NRRL B-3711) protein is Global transcriptional regulator Spx 2.